The following is a 23-amino-acid chain: Fimbrial protein (23 aa).

A disulfide bridge links Cys-8 with Cys-21.

The protein belongs to the N-Me-Phe pilin family. In terms of assembly, the pili are polar flexible filaments of about 5.4 nanometers diameter and 2.5 micrometers average length; they consist of only a single polypeptide chain arranged in a helical configuration of five subunits per turn in the assembled pilus.

The protein resides in the fimbrium. This chain is Fimbrial protein (pil), found in Pseudomonas aeruginosa.